Reading from the N-terminus, the 157-residue chain is SsrA-binding protein (157 aa).

Residues 138 to 151 (ATEAKRDWGREKQR) show a composition bias toward basic and acidic residues. Residues 138-157 (ATEAKRDWGREKQRLLKQHS) are disordered.

It belongs to the SmpB family.

The protein resides in the cytoplasm. Required for rescue of stalled ribosomes mediated by trans-translation. Binds to transfer-messenger RNA (tmRNA), required for stable association of tmRNA with ribosomes. tmRNA and SmpB together mimic tRNA shape, replacing the anticodon stem-loop with SmpB. tmRNA is encoded by the ssrA gene; the 2 termini fold to resemble tRNA(Ala) and it encodes a 'tag peptide', a short internal open reading frame. During trans-translation Ala-aminoacylated tmRNA acts like a tRNA, entering the A-site of stalled ribosomes, displacing the stalled mRNA. The ribosome then switches to translate the ORF on the tmRNA; the nascent peptide is terminated with the 'tag peptide' encoded by the tmRNA and targeted for degradation. The ribosome is freed to recommence translation, which seems to be the essential function of trans-translation. The sequence is that of SsrA-binding protein from Cereibacter sphaeroides (strain ATCC 17025 / ATH 2.4.3) (Rhodobacter sphaeroides).